The sequence spans 168 residues: Nucleoside deoxyribosyltransferase (168 aa).

The active-site Nucleophile is Glu103.

This sequence belongs to the nucleoside deoxyribosyltransferase family.

It carries out the reaction 2-deoxy-D-ribosyl-base(1) + base(2) = 2-deoxy-D-ribosyl-base(2) + base(1).. It participates in nucleotide metabolism; nucleotide salvage pathway. Its function is as follows. Catalyzes the cleavage of the glycosidic bond of 2'-deoxyribonucleosides and the transfer of the deoxyribosyl moiety to an acceptor purine or pyrimidine base. The sequence is that of Nucleoside deoxyribosyltransferase (ntd) from Limosilactobacillus fermentum (Lactobacillus fermentum).